The primary structure comprises 1459 residues: DNA-binding protein RFX7 (1459 aa).

Residues 1 to 27 form a disordered region; it reads MAEEQQQPPPQQLDAPQQLPLSAPNPG. Over residues 12–21 the composition is skewed to low complexity; that stretch reads QLDAPQQLPL. The RFX-type winged-helix DNA-binding region spans 108 to 183; the sequence is AFSWIRNTLE…YCYSGLRKKA (76 aa). The short motif at 188-193 is the PxLPxI/L motif; mediates interaction with ANKRA2 and RFXANK element; it reads PTLPNL. 6 disordered regions span residues 303-347, 404-428, 482-590, 634-659, 688-716, and 918-1016; these read AKQQ…LPNG, SVKQ…ARHR, PSNS…GVTE, FTST…SPRK, GQKP…AQIP, and SVTP…VPPS. Polar residues-rich tracts occupy residues 404–416 and 482–502; these read SVKQ…QNVP and PSNS…TGTT. Residues 521–534 show a composition bias toward low complexity; sequence SPGSRASSTGGTSA. A compositionally biased stretch (basic and acidic residues) spans 537–549; it reads VKMEPEGSSDEHP. Composition is skewed to polar residues over residues 562 to 578, 634 to 645, and 706 to 716; these read PLTT…NTDG, FTSTSSPSNGDS, and TESSTAGAQIP. Residues 947–963 show a composition bias toward pro residues; that stretch reads TPTPTPTPTPTPTPTPT. Residues 971 to 1009 show a composition bias toward polar residues; the sequence is GSQSLSRESPCSRLAQTTPVDSALGSSRHTPIGTPHSNC.

This sequence belongs to the RFX family. In terms of assembly, interacts (via PxLPxI/L motif) with RFXANK (via ankyrin repeats). Interacts (via PxLPxI/L motif) with ANKRA2 (via ankyrin repeats). Expressed in spleen and lymph node and to a lower extend in brain (at protein level). Expressed in lymphoid organs and lymphoid cell subsets. Expressed throughout natural killer (NK) cell maturation.

The protein resides in the nucleus. Its function is as follows. Transcription factor. Acts as a transcriptional activator by binding to promoter regions of target genes, such as Rec8, Mxd4 and Ddit4. Plays a role in natural killer (NK) cell maintenance and immunity. May play a role in the process of ciliogenesis in the neural tube and neural tube closure. The chain is DNA-binding protein RFX7 from Mus musculus (Mouse).